The following is a 522-amino-acid chain: Polyprenol-phosphate-mannose--protein mannosyltransferase (522 aa).

Topologically, residues 1-42 (MTARPPESCVLAKDRPEEPVVPVVSPGPLVPVADFGPLDRLR) are cytoplasmic. A helical transmembrane segment spans residues 43-63 (GWIVTGLITLLATVTRFLNLG). The Extracellular portion of the chain corresponds to 64–119 (SLTDAGTPIFDEKHYAPQAWQVLNNHGVEDNPGYGLVVHPPVGKQLIAIGEAIFGY). Residues 120-140 (NGFGWRFTGALLGVVLVALVV) form a helical membrane-spanning segment. At 141-149 (RIVRRISRS) the chain is on the cytoplasmic side. A helical transmembrane segment spans residues 150–170 (TLVGAIAGVLLICDGVSFVTA). Position 171 (R171) is a topological domain, extracellular. Residues 172-192 (TALLDGFLTFFVVAAFGALIV) form a helical membrane-spanning segment. The Cytoplasmic portion of the chain corresponds to 193 to 239 (DRDQVRERMHIALLAGRSAATVWGPRVGVRWWRFGAGVLLGLACATK). Residues 240 to 260 (WSGVYFVLFFGAMALAFDVAA) form a helical membrane-spanning segment. Residues 261–281 (RRQYQVQRPWLGTVRRDVLPS) are Extracellular-facing. A helical transmembrane segment spans residues 282–302 (GYALGLIPFAVYLATYAPWFA). The Cytoplasmic portion of the chain corresponds to 303-390 (SETAIDRHAV…CGAQSCVKAE (88 aa)). The helical transmembrane segment at 391-411 (MLVGTPAMWWLAVPVLAYAGW) threads the bilayer. Topologically, residues 412–418 (RMFVRRD) are extracellular. The chain crosses the membrane as a helical span at residues 419–439 (WRYAVVLVGYCAGWLPWFADI). Topologically, residues 440 to 442 (DRQ) are cytoplasmic. A helical transmembrane segment spans residues 443 to 463 (MYFFYAATMAPFLVMGISLVL). The Extracellular portion of the chain corresponds to 464 to 478 (GDILYHPGQGSERRT). Residues 479 to 499 (LGLIVVCCYVALVVTNFAWLY) traverse the membrane as a helical segment. Residues 500 to 522 (PVLTGLPISQQTWNLEIWLPSWR) lie on the Cytoplasmic side of the membrane.

The protein belongs to the glycosyltransferase 39 family.

It is found in the cell membrane. It functions in the pathway protein modification; protein glycosylation. In terms of biological role, protein O-mannosyltransferase that catalyzes the transfer of a single mannose residue from a polyprenol phospho-mannosyl lipidic donor to the hydroxyl group of selected serine and threonine residues in acceptor proteins. This Mycobacterium tuberculosis (strain CDC 1551 / Oshkosh) protein is Polyprenol-phosphate-mannose--protein mannosyltransferase (pmt).